Consider the following 130-residue polypeptide: Small ribosomal subunit protein uS9 (130 aa).

A disordered region spans residues 98–130; the sequence is LKRAGLLTRDPRMKERKKPGLKKARRSPQFSKR. Over residues 111–130 the composition is skewed to basic residues; the sequence is KERKKPGLKKARRSPQFSKR.

Belongs to the universal ribosomal protein uS9 family.

The chain is Small ribosomal subunit protein uS9 from Staphylococcus saprophyticus subsp. saprophyticus (strain ATCC 15305 / DSM 20229 / NCIMB 8711 / NCTC 7292 / S-41).